Here is a 141-residue protein sequence, read N- to C-terminus: ATP synthase F(0) complex subunit C3, mitochondrial (141 aa).

The N-terminal 66 residues, 1–66 (MFACAKLART…REFQTSVISR (66 aa)), are a transit peptide targeting the mitochondrion. The chain crosses the membrane as a helical span at residues 82-102 (VGVAGSGAGIGTVFGSLIIGY). Lys109 is subject to N6,N6,N6-trimethyllysine. The chain crosses the membrane as a helical span at residues 117–137 (ILGFALSEAMGLFCLMVAFLI).

It belongs to the ATPase C chain family. In terms of assembly, F-type ATPases have 2 components, CF(1) - the catalytic core - and CF(0) - the membrane proton channel. CF(1) has five subunits: alpha(3), beta(3), gamma(1), delta(1), epsilon(1). CF(0) has three main subunits: a, b and c. Interacts with TMEM70 and TMEM242. Post-translationally, trimethylated by ATPSCKMT at Lys-109. Methylation is required for proper incorporation of the C subunit into the ATP synthase complex and mitochondrial respiration.

It is found in the mitochondrion membrane. Mitochondrial membrane ATP synthase (F(1)F(0) ATP synthase or Complex V) produces ATP from ADP in the presence of a proton gradient across the membrane which is generated by electron transport complexes of the respiratory chain. F-type ATPases consist of two structural domains, F(1) - containing the extramembraneous catalytic core and F(0) - containing the membrane proton channel, linked together by a central stalk and a peripheral stalk. During catalysis, ATP synthesis in the catalytic domain of F(1) is coupled via a rotary mechanism of the central stalk subunits to proton translocation. Part of the complex F(0) domain. A homomeric c-ring of probably 10 subunits is part of the complex rotary element. The polypeptide is ATP synthase F(0) complex subunit C3, mitochondrial (Mus musculus (Mouse)).